Consider the following 248-residue polypeptide: Pyridoxine 5'-phosphate synthase (248 aa).

3-amino-2-oxopropyl phosphate is bound at residue Asn-12. 1-deoxy-D-xylulose 5-phosphate is bound at residue Asp-14–His-15. Arg-23 contributes to the 3-amino-2-oxopropyl phosphate binding site. The active-site Proton acceptor is His-48. 1-deoxy-D-xylulose 5-phosphate contacts are provided by Arg-50 and His-55. Glu-75 serves as the catalytic Proton acceptor. Residue Thr-105 participates in 1-deoxy-D-xylulose 5-phosphate binding. His-196 serves as the catalytic Proton donor. 3-amino-2-oxopropyl phosphate is bound by residues Gly-197 and Gly-218–His-219.

Belongs to the PNP synthase family. Homooctamer; tetramer of dimers.

The protein localises to the cytoplasm. It carries out the reaction 3-amino-2-oxopropyl phosphate + 1-deoxy-D-xylulose 5-phosphate = pyridoxine 5'-phosphate + phosphate + 2 H2O + H(+). It functions in the pathway cofactor biosynthesis; pyridoxine 5'-phosphate biosynthesis; pyridoxine 5'-phosphate from D-erythrose 4-phosphate: step 5/5. Catalyzes the complicated ring closure reaction between the two acyclic compounds 1-deoxy-D-xylulose-5-phosphate (DXP) and 3-amino-2-oxopropyl phosphate (1-amino-acetone-3-phosphate or AAP) to form pyridoxine 5'-phosphate (PNP) and inorganic phosphate. The protein is Pyridoxine 5'-phosphate synthase of Ectopseudomonas mendocina (strain ymp) (Pseudomonas mendocina).